The following is a 161-amino-acid chain: Ribonuclease H (161 aa).

Residues 3–144 (GLKQISIYTD…CDDLARQAAE (142 aa)) enclose the RNase H type-1 domain. Mg(2+)-binding residues include D12, E50, D72, and D136. The interval 133–161 (ERCDDLARQAAEAKPSQEDSGYINQQAQA) is disordered. Positions 150–161 (EDSGYINQQAQA) are enriched in polar residues.

It belongs to the RNase H family. As to quaternary structure, monomer. Mg(2+) is required as a cofactor.

It is found in the cytoplasm. The enzyme catalyses Endonucleolytic cleavage to 5'-phosphomonoester.. Its function is as follows. Endonuclease that specifically degrades the RNA of RNA-DNA hybrids. This chain is Ribonuclease H, found in Shewanella halifaxensis (strain HAW-EB4).